A 320-amino-acid chain; its full sequence is Methionyl-tRNA formyltransferase (320 aa).

114–117 lines the (6S)-5,6,7,8-tetrahydrofolate pocket; the sequence is SLLP.

This sequence belongs to the Fmt family.

It carries out the reaction L-methionyl-tRNA(fMet) + (6R)-10-formyltetrahydrofolate = N-formyl-L-methionyl-tRNA(fMet) + (6S)-5,6,7,8-tetrahydrofolate + H(+). Functionally, attaches a formyl group to the free amino group of methionyl-tRNA(fMet). The formyl group appears to play a dual role in the initiator identity of N-formylmethionyl-tRNA by promoting its recognition by IF2 and preventing the misappropriation of this tRNA by the elongation apparatus. The polypeptide is Methionyl-tRNA formyltransferase (Acinetobacter baumannii (strain ACICU)).